Here is a 187-residue protein sequence, read N- to C-terminus: Protein GrpE (187 aa).

The disordered stretch occupies residues 1 to 31 (MEKKETKNDAEKNNKQDNKSTKSQKKENLNL).

This sequence belongs to the GrpE family. In terms of assembly, homodimer.

The protein resides in the cytoplasm. Functionally, participates actively in the response to hyperosmotic and heat shock by preventing the aggregation of stress-denatured proteins, in association with DnaK and GrpE. It is the nucleotide exchange factor for DnaK and may function as a thermosensor. Unfolded proteins bind initially to DnaJ; upon interaction with the DnaJ-bound protein, DnaK hydrolyzes its bound ATP, resulting in the formation of a stable complex. GrpE releases ADP from DnaK; ATP binding to DnaK triggers the release of the substrate protein, thus completing the reaction cycle. Several rounds of ATP-dependent interactions between DnaJ, DnaK and GrpE are required for fully efficient folding. In Borrelia garinii subsp. bavariensis (strain ATCC BAA-2496 / DSM 23469 / PBi) (Borreliella bavariensis), this protein is Protein GrpE.